A 336-amino-acid chain; its full sequence is MSRVTLSRYLIEQTRSNNTPADLRFLIEVVARACKAISHQVSKGALGGVLGSAGSENVQGEVQKKLDVLSNEILLEANEWGGHLAGMASEEMDNAYQIPGKYPKGAYLLVFDPLDGSSNIDVNVSVGTIFSVLRCPDACFSQNDALGEEAFLQPGTKQVAAGYAIYGPQTMLVLTLGHGVMGFTLDRELGSFVLTHENLCVPQSTAEFAINMSNQRHWEAPVQRYVGELLAGKEGPLGKNYNMRWIASMVADVHRILTRGGIFMYPRDAREPDKAGKLRLMYEANPMSMIIEQAGGAATTGTQRILEIQPQSLHQRVPVFLGSKEEVERVTGYHQG.

Residues E90, D112, L114, and D115 each coordinate Mg(2+). Residues D115 to S118, N211, and K277 each bind substrate. E283 is a Mg(2+) binding site.

It belongs to the FBPase class 1 family. As to quaternary structure, homotetramer. Requires Mg(2+) as cofactor.

It is found in the cytoplasm. It catalyses the reaction beta-D-fructose 1,6-bisphosphate + H2O = beta-D-fructose 6-phosphate + phosphate. It participates in carbohydrate biosynthesis; gluconeogenesis. The chain is Fructose-1,6-bisphosphatase class 1 from Stutzerimonas stutzeri (strain A1501) (Pseudomonas stutzeri).